The following is a 602-amino-acid chain: Aspartate--tRNA(Asp/Asn) ligase (602 aa).

Glutamate 191 contacts L-aspartate. The tract at residues glutamine 215–lysine 218 is aspartate. Arginine 237 is an L-aspartate binding site. Residues arginine 237–glutamate 239 and glutamine 246 contribute to the ATP site. Histidine 465 is an L-aspartate binding site. ATP is bound at residue glutamate 499. Residue arginine 506 coordinates L-aspartate. Glycine 551–arginine 554 is an ATP binding site.

Belongs to the class-II aminoacyl-tRNA synthetase family. Type 1 subfamily. In terms of assembly, homodimer.

It is found in the cytoplasm. The catalysed reaction is tRNA(Asx) + L-aspartate + ATP = L-aspartyl-tRNA(Asx) + AMP + diphosphate. Aspartyl-tRNA synthetase with relaxed tRNA specificity since it is able to aspartylate not only its cognate tRNA(Asp) but also tRNA(Asn). Reaction proceeds in two steps: L-aspartate is first activated by ATP to form Asp-AMP and then transferred to the acceptor end of tRNA(Asp/Asn). This is Aspartate--tRNA(Asp/Asn) ligase from Treponema pallidum (strain Nichols).